The chain runs to 260 residues: ATP synthase subunit a (260 aa).

Helical transmembrane passes span 30–50 (IAFT…IVFV), 96–116 (LFAF…LVGV), 125–145 (FTVT…VGFA), 151–171 (FFSL…IFPI), 187–207 (LFVA…FVIS), 213–233 (VGTF…ICAL), and 234–254 (ELLV…VYLN).

The protein belongs to the ATPase A chain family. As to quaternary structure, F-type ATPases have 2 components, CF(1) - the catalytic core - and CF(0) - the membrane proton channel. CF(1) has five subunits: alpha(3), beta(3), gamma(1), delta(1), epsilon(1). CF(0) has three main subunits: a(1), b(2) and c(9-12). The alpha and beta chains form an alternating ring which encloses part of the gamma chain. CF(1) is attached to CF(0) by a central stalk formed by the gamma and epsilon chains, while a peripheral stalk is formed by the delta and b chains.

Its subcellular location is the cell inner membrane. In terms of biological role, key component of the proton channel; it plays a direct role in the translocation of protons across the membrane. The polypeptide is ATP synthase subunit a (Novosphingobium aromaticivorans (strain ATCC 700278 / DSM 12444 / CCUG 56034 / CIP 105152 / NBRC 16084 / F199)).